Consider the following 588-residue polypeptide: Catechol oxidase B, chloroplastic (588 aa).

The N-terminal 88 residues, 1–88 (SSSSTTTIPL…AANLAPLASA (88 aa)), are a transit peptide targeting the chloroplast. 2 cysteine pairs are disulfide-bonded: C99/C115 and C114/C181. Cu cation-binding residues include H180, H198, H207, H329, H333, and H364. The 2'-(S-cysteinyl)-histidine (Cys-His) cross-link spans 184-198 (CNGAYKVGGKELQVH).

It belongs to the tyrosinase family. The cofactor is Cu(2+).

The protein resides in the plastid. Its subcellular location is the chloroplast thylakoid lumen. The catalysed reaction is 2 catechol + O2 = 2 1,2-benzoquinone + 2 H2O. Functionally, catalyzes the oxidation of mono- and o-diphenols to o-diquinones. This Solanum tuberosum (Potato) protein is Catechol oxidase B, chloroplastic.